The chain runs to 353 residues: Phospho-N-acetylmuramoyl-pentapeptide-transferase (353 aa).

10 helical membrane-spanning segments follow: residues 22 to 42, 65 to 85, 88 to 108, 129 to 149, 161 to 181, 192 to 212, 228 to 248, 256 to 276, 281 to 301, and 330 to 350; these read FAFF…ITWA, TPTM…LSCI, DNIF…IGLI, LLTQ…SSEL, PLFD…ISSS, GLAT…LYLS, GLGE…GFLW, VFMG…LAII, ILLL…ILQV, and KIIV…LASI.

The protein belongs to the glycosyltransferase 4 family. MraY subfamily. Mg(2+) serves as cofactor.

It is found in the cell inner membrane. The enzyme catalyses UDP-N-acetyl-alpha-D-muramoyl-L-alanyl-gamma-D-glutamyl-meso-2,6-diaminopimeloyl-D-alanyl-D-alanine + di-trans,octa-cis-undecaprenyl phosphate = di-trans,octa-cis-undecaprenyl diphospho-N-acetyl-alpha-D-muramoyl-L-alanyl-D-glutamyl-meso-2,6-diaminopimeloyl-D-alanyl-D-alanine + UMP. It functions in the pathway cell wall biogenesis; peptidoglycan biosynthesis. In terms of biological role, catalyzes the initial step of the lipid cycle reactions in the biosynthesis of the cell wall peptidoglycan: transfers peptidoglycan precursor phospho-MurNAc-pentapeptide from UDP-MurNAc-pentapeptide onto the lipid carrier undecaprenyl phosphate, yielding undecaprenyl-pyrophosphoryl-MurNAc-pentapeptide, known as lipid I. This chain is Phospho-N-acetylmuramoyl-pentapeptide-transferase, found in Campylobacter jejuni subsp. jejuni serotype O:23/36 (strain 81-176).